A 247-amino-acid chain; its full sequence is Geranylgeranylglyceryl phosphate synthase (247 aa).

Positions 23 and 52 each coordinate Mg(2+). Sn-glycerol 1-phosphate-binding positions include 171 to 177 (YLEAGSG), 203 to 204 (GG), and 225 to 226 (GT).

This sequence belongs to the GGGP/HepGP synthase family. Group II subfamily. Mg(2+) serves as cofactor.

Its subcellular location is the cytoplasm. It carries out the reaction sn-glycerol 1-phosphate + (2E,6E,10E)-geranylgeranyl diphosphate = sn-3-O-(geranylgeranyl)glycerol 1-phosphate + diphosphate. It participates in membrane lipid metabolism; glycerophospholipid metabolism. In terms of biological role, prenyltransferase that catalyzes the transfer of the geranylgeranyl moiety of geranylgeranyl diphosphate (GGPP) to the C3 hydroxyl of sn-glycerol-1-phosphate (G1P). This reaction is the first ether-bond-formation step in the biosynthesis of archaeal membrane lipids. The sequence is that of Geranylgeranylglyceryl phosphate synthase from Methanococcoides burtonii (strain DSM 6242 / NBRC 107633 / OCM 468 / ACE-M).